The primary structure comprises 223 residues: Deoxyribose-phosphate aldolase (223 aa).

The active-site Proton donor/acceptor is the aspartate 92. Lysine 154 acts as the Schiff-base intermediate with acetaldehyde in catalysis. Lysine 182 acts as the Proton donor/acceptor in catalysis.

The protein belongs to the DeoC/FbaB aldolase family. DeoC type 1 subfamily.

It localises to the cytoplasm. The enzyme catalyses 2-deoxy-D-ribose 5-phosphate = D-glyceraldehyde 3-phosphate + acetaldehyde. The protein operates within carbohydrate degradation; 2-deoxy-D-ribose 1-phosphate degradation; D-glyceraldehyde 3-phosphate and acetaldehyde from 2-deoxy-alpha-D-ribose 1-phosphate: step 2/2. In terms of biological role, catalyzes a reversible aldol reaction between acetaldehyde and D-glyceraldehyde 3-phosphate to generate 2-deoxy-D-ribose 5-phosphate. The protein is Deoxyribose-phosphate aldolase of Haemophilus influenzae (strain PittEE).